We begin with the raw amino-acid sequence, 101 residues long: Small ribosomal subunit protein uS14 (101 aa).

The protein belongs to the universal ribosomal protein uS14 family. As to quaternary structure, part of the 30S ribosomal subunit. Contacts proteins S3 and S10.

In terms of biological role, binds 16S rRNA, required for the assembly of 30S particles and may also be responsible for determining the conformation of the 16S rRNA at the A site. The protein is Small ribosomal subunit protein uS14 of Cellvibrio japonicus (strain Ueda107) (Pseudomonas fluorescens subsp. cellulosa).